The primary structure comprises 42 residues: uncharacterized protein (42 aa).

The chain crosses the membrane as a helical span at residues 18 to 38 (VGAISLTVMMILFFIAIVWFL).

It is found in the host membrane. This is an uncharacterized protein from His1 virus (isolate Australia/Victoria) (His1V).